A 289-amino-acid polypeptide reads, in one-letter code: Protease HtpX (289 aa).

2 helical membrane-spanning segments follow: residues 5 to 25 and 33 to 53; these read IVLF…VMSL and MSGL…ISLL. Histidine 140 serves as a coordination point for Zn(2+). Glutamate 141 is an active-site residue. Histidine 144 is a Zn(2+) binding site. The next 2 membrane-spanning stretches (helical) occupy residues 155-175 and 193-213; these read LLQG…GGFI and GIVL…TMWF. Residue glutamate 218 participates in Zn(2+) binding.

This sequence belongs to the peptidase M48B family. It depends on Zn(2+) as a cofactor.

It is found in the cell inner membrane. This Xylella fastidiosa (strain M23) protein is Protease HtpX.